The sequence spans 207 residues: FMN-dependent NADH:quinone oxidoreductase (207 aa).

Serine 10 serves as a coordination point for FMN.

The protein belongs to the azoreductase type 1 family. As to quaternary structure, homodimer. FMN is required as a cofactor.

The catalysed reaction is 2 a quinone + NADH + H(+) = 2 a 1,4-benzosemiquinone + NAD(+). It carries out the reaction N,N-dimethyl-1,4-phenylenediamine + anthranilate + 2 NAD(+) = 2-(4-dimethylaminophenyl)diazenylbenzoate + 2 NADH + 2 H(+). In terms of biological role, quinone reductase that provides resistance to thiol-specific stress caused by electrophilic quinones. Also exhibits azoreductase activity. Catalyzes the reductive cleavage of the azo bond in aromatic azo compounds to the corresponding amines. The polypeptide is FMN-dependent NADH:quinone oxidoreductase (Shouchella clausii (strain KSM-K16) (Alkalihalobacillus clausii)).